The sequence spans 61 residues: Small ribosomal subunit protein uS14 (61 aa).

Zn(2+) contacts are provided by Cys-24, Cys-27, Cys-40, and Cys-43.

The protein belongs to the universal ribosomal protein uS14 family. Zinc-binding uS14 subfamily. As to quaternary structure, part of the 30S ribosomal subunit. Contacts proteins S3 and S10. The cofactor is Zn(2+).

Binds 16S rRNA, required for the assembly of 30S particles and may also be responsible for determining the conformation of the 16S rRNA at the A site. This chain is Small ribosomal subunit protein uS14, found in Helicobacter pylori (strain G27).